Here is a 437-residue protein sequence, read N- to C-terminus: Trigger factor (437 aa).

Positions 161-246 constitute a PPIase FKBP-type domain; that stretch reads DDQVNIDFVG…VNSVSAPQLP (86 aa).

This sequence belongs to the FKBP-type PPIase family. Tig subfamily.

It is found in the cytoplasm. The enzyme catalyses [protein]-peptidylproline (omega=180) = [protein]-peptidylproline (omega=0). Its function is as follows. Involved in protein export. Acts as a chaperone by maintaining the newly synthesized protein in an open conformation. Functions as a peptidyl-prolyl cis-trans isomerase. This chain is Trigger factor, found in Pseudomonas putida (strain W619).